The chain runs to 371 residues: Spermatogenic leucine zipper protein 1 (371 aa).

2 coiled-coil regions span residues 96–148 and 177–289; these read EVSE…TVQD and FPHI…QKEE. Ser-98 carries the phosphoserine modification. A helix-loop-helix motif region spans residues 110 to 120; it reads INKELVKKLLA. The segment at 121 to 188 is basic motif; the sequence is SLDLGKKENA…HIQEENIRLR (68 aa). The residue at position 202 (Ser-202) is a Phosphoserine. Residues 223–240 show a composition bias toward polar residues; that stretch reads KTLKNNGTHSPTQTNNES. A disordered region spans residues 223–246; that stretch reads KTLKNNGTHSPTQTNNESAKQELE. The leucine-zipper stretch occupies residues 245–266; the sequence is LEEQVKRLKEDTYSLHLIATLL.

Phosphorylated by MAPK1/ERK2 and MAPK3/ERK1.

It localises to the cytoplasm. The protein localises to the nucleus. Functionally, transcription factor that binds to the DNA sequence 5'-CANNTG-3'(E box) and the G-box motif. May play an important role in the regulation of cell proliferation and differentiation during spermatogenesis. The polypeptide is Spermatogenic leucine zipper protein 1 (SPZ1) (Bos taurus (Bovine)).